The chain runs to 463 residues: Cis-zeatin O-glucosyltransferase 2 (463 aa).

H21 acts as the Proton acceptor in catalysis. An anthocyanidin-binding residues include H21 and N91. D127 acts as the Charge relay in catalysis. UDP-alpha-D-glucose contacts are provided by A339, Q341, H356, W359, N360, S361, E364, D380, and Q381.

The protein belongs to the UDP-glycosyltransferase family. As to expression, highly expressed in root. Expressed at much lower level in kernel. Weakly or not expressed in expressed in stems and leaves.

It carries out the reaction cis-zeatin + UDP-alpha-D-glucose = O-beta-D-glucosyl-cis-zeatin + UDP + H(+). Utilizes UDP-glucose as the sugar donor and catalyzes the formation of O-beta-D-glucosyl-cis-zeatin from cis-zeatin. May regulate active versus storage forms of cytokinins and could have an impact on seed growth. The polypeptide is Cis-zeatin O-glucosyltransferase 2 (Zea mays (Maize)).